The sequence spans 485 residues: Glutamyl-tRNA(Gln) amidotransferase subunit A (485 aa).

Residues lysine 79 and serine 154 each act as charge relay system in the active site. Serine 178 functions as the Acyl-ester intermediate in the catalytic mechanism.

This sequence belongs to the amidase family. GatA subfamily. As to quaternary structure, heterotrimer of A, B and C subunits.

It carries out the reaction L-glutamyl-tRNA(Gln) + L-glutamine + ATP + H2O = L-glutaminyl-tRNA(Gln) + L-glutamate + ADP + phosphate + H(+). Functionally, allows the formation of correctly charged Gln-tRNA(Gln) through the transamidation of misacylated Glu-tRNA(Gln) in organisms which lack glutaminyl-tRNA synthetase. The reaction takes place in the presence of glutamine and ATP through an activated gamma-phospho-Glu-tRNA(Gln). The chain is Glutamyl-tRNA(Gln) amidotransferase subunit A from Staphylococcus aureus (strain MW2).